A 587-amino-acid polypeptide reads, in one-letter code: Protein FRIGIDA-ESSENTIAL 1 (587 aa).

The segment at 96–123 (KRAALPCKFFAKGWCFNGVSCKFLHVKE) adopts a C3H1-type zinc-finger fold. Disordered stretches follow at residues 264–346 (DMGS…SFTI), 368–421 (GDRP…HQET), and 467–492 (IKPA…SDEI). Residues 294–304 (NGNSLSGSGSL) are compositionally biased toward low complexity. The segment covering 470–479 (AGHDSWHRSD) has biased composition (basic and acidic residues).

As to quaternary structure, component of the transcription activator complex FRI-C composed of FRI, FRL1, SUF4, FLX and FES1. Interacts with FLX, (via C-terminus) with FRI (via C-terminus), and with RIN1, a component of the SWR1 chromatin-remodeling complex. Expressed in root and shoot apices and vasculature.

It localises to the nucleus. Functionally, transcriptional activator involved in the FRIGIDA-mediated vernalization pathway, but not in the autonomous flowering pathway. Acts cooperatively with FRI (FRIGIDA) or FRL1 (FRIGIDA-LIKE 1) to promote FLC (FLOWERING LOCUS C) expression. Required for the stabilization of the FRI-C complex. The sequence is that of Protein FRIGIDA-ESSENTIAL 1 (FES1) from Arabidopsis thaliana (Mouse-ear cress).